We begin with the raw amino-acid sequence, 93 residues long: Small ribosomal subunit protein uS19 (93 aa).

Residues 73–93 (EFSPTRTYRGHDKKDKKIQKK) are disordered.

Belongs to the universal ribosomal protein uS19 family.

Its function is as follows. Protein S19 forms a complex with S13 that binds strongly to the 16S ribosomal RNA. This Phytoplasma mali (strain AT) protein is Small ribosomal subunit protein uS19.